The chain runs to 1077 residues: Deoxyribonuclease CdiA (1077 aa).

The segment at 67 to 384 (IGTSRQKTTD…DRDNYDAKQS (318 aa)) is FHA-2. Polar residues predominate over residues 531–546 (QQNVDDLSRDTGNANG). The tract at residues 531-555 (QQNVDDLSRDTGNANGSIGPIFDKE) is disordered. The VENN CT cleavage motif signature appears at 781 to 784 (VENN). The tract at residues 954 to 1077 (MPWEDYVGKT…GVKVTVTQVK (124 aa)) is DNase activity.

In terms of assembly, interacts with cognate immunity protein CdiI-YPIII, which blocks its toxic DNase activity. The cofactor is Zn(2+).

The protein localises to the target cell. It localises to the target cell cytoplasm. Toxic component of a toxin-immunity protein module, which functions as a cellular contact-dependent growth inhibition (CDI) system. CDI modules allow bacteria to communicate with and inhibit the growth of closely related neighboring bacteria in a contact-dependent fashion. The C-terminal 123 residues (954-1077) has DNase activity in the presence of Zn(2+), converting supercoiled DNA into open-circular form. Toxic activity is neutralized by coexpression of the cognate immunity protein CdiI-YPIII, but not by non-cognate immunity proteins from other toxin-immunity modules. Expression of the DNase domain as a chimera allows bacteria to attack other non-immune bacteria which become filamentous and have lost DNA staining. Its function is as follows. The CdiA protein is thought to be exported from the cell through the central lumen of CdiB, the other half of its two-partner system (TPS). The TPS domain probably remains associated with CdiB while the FHA-1 domain forms an extended filament with the receptor-binding domain (RBD) at its extremity; in the secretion arrested state the C-terminus of the RBD and YP domains form a hairpin-like structure as the FHA-2, PT and CT domains are periplasmic. The YP domain is probably responsible for this arrest at the point where it re-enters the host cell periplasm. Upon binding to a target cell outer membrane receptor a signal is transmitted to activate secretion. The filament elongates slightly, the rest of CdiA is secreted and the FHA-2 domain becomes stably associated with the target cell's outer membrane where it facilitates entry of the toxic CT domain into the target cell periplasm. From there the toxic CT domain is cleaved and gains access to the target cell cytoplasm via an inner membrane protein. This Yersinia pseudotuberculosis serotype O:3 (strain YPIII) protein is Deoxyribonuclease CdiA.